The chain runs to 412 residues: Probable tRNA pseudouridine synthase D (412 aa).

Asp-97 serves as the catalytic Nucleophile. In terms of domain architecture, TRUD spans 167–370 (ALPNYYGYQR…YGGYRKVVLT (204 aa)).

It belongs to the pseudouridine synthase TruD family.

It catalyses the reaction uridine(13) in tRNA = pseudouridine(13) in tRNA. Its function is as follows. Could be responsible for synthesis of pseudouridine from uracil-13 in transfer RNAs. This is Probable tRNA pseudouridine synthase D from Pyrobaculum islandicum (strain DSM 4184 / JCM 9189 / GEO3).